Consider the following 333-residue polypeptide: tRNA N6-adenosine threonylcarbamoyltransferase (333 aa).

Fe cation contacts are provided by histidine 118 and histidine 122. Residues 140–144 (VVSGG), aspartate 173, glycine 186, and asparagine 274 each bind substrate. Position 298 (aspartate 298) interacts with Fe cation.

It belongs to the KAE1 / TsaD family. Fe(2+) is required as a cofactor.

The protein resides in the cytoplasm. The catalysed reaction is L-threonylcarbamoyladenylate + adenosine(37) in tRNA = N(6)-L-threonylcarbamoyladenosine(37) in tRNA + AMP + H(+). Functionally, required for the formation of a threonylcarbamoyl group on adenosine at position 37 (t(6)A37) in tRNAs that read codons beginning with adenine. Is involved in the transfer of the threonylcarbamoyl moiety of threonylcarbamoyl-AMP (TC-AMP) to the N6 group of A37, together with TsaE and TsaB. TsaD likely plays a direct catalytic role in this reaction. This is tRNA N6-adenosine threonylcarbamoyltransferase from Deinococcus geothermalis (strain DSM 11300 / CIP 105573 / AG-3a).